The sequence spans 182 residues: NADH-quinone oxidoreductase subunit B 2 (182 aa).

The [4Fe-4S] cluster site is built by Cys47, Cys48, Cys113, and Cys142.

The protein belongs to the complex I 20 kDa subunit family. In terms of assembly, NDH-1 is composed of 14 different subunits. Subunits NuoB, C, D, E, F, and G constitute the peripheral sector of the complex. Requires [4Fe-4S] cluster as cofactor.

Its subcellular location is the cell inner membrane. The enzyme catalyses a quinone + NADH + 5 H(+)(in) = a quinol + NAD(+) + 4 H(+)(out). Its function is as follows. NDH-1 shuttles electrons from NADH, via FMN and iron-sulfur (Fe-S) centers, to quinones in the respiratory chain. The immediate electron acceptor for the enzyme in this species is believed to be ubiquinone. Couples the redox reaction to proton translocation (for every two electrons transferred, four hydrogen ions are translocated across the cytoplasmic membrane), and thus conserves the redox energy in a proton gradient. This chain is NADH-quinone oxidoreductase subunit B 2, found in Anaeromyxobacter sp. (strain K).